The chain runs to 518 residues: Retinal dehydrogenase 2 (518 aa).

At Tyr-168 the chain carries Phosphotyrosine. NAD(+) is bound by residues 184–186 (IPW), 210–213 (KPAE), and 264–266 (STE). The Proton acceptor role is filled by Glu-286. Cys-320 acts as the Nucleophile in catalysis. A Phosphoserine modification is found at Ser-351. NAD(+)-binding positions include 366-370 (KQYNK) and Glu-417.

The protein belongs to the aldehyde dehydrogenase family. As to quaternary structure, homotetramer.

It is found in the cytoplasm. The catalysed reaction is retinal + NAD(+) + H2O = retinoate + NADH + 2 H(+). It catalyses the reaction all-trans-retinal + NAD(+) + H2O = all-trans-retinoate + NADH + 2 H(+). The enzyme catalyses all-trans-13,14-dihydroretinal + NAD(+) + H2O = all-trans-13,14-dihydroretinoate + NADH + 2 H(+). It participates in cofactor metabolism; retinol metabolism. Catalyzes the NAD-dependent oxidation of aldehyde substrates, such as all-trans-retinal and all-trans-13,14-dihydroretinal, to their corresponding carboxylic acids, all-trans-retinoate and all-trans-13,14-dihydroretinoate, respectively. Retinoate signaling is critical for the transcriptional control of many genes, for instance it is crucial for initiation of meiosis in both male and female. Recognizes retinal as substrate, both in its free form and when bound to cellular retinol-binding protein. Lacks activity with benzaldehyde, acetaldehyde and octanal. Displays complete lack of activity with citral. The polypeptide is Retinal dehydrogenase 2 (Aldh1a2) (Mus musculus (Mouse)).